The sequence spans 482 residues: Lipoamide acyltransferase component of branched-chain alpha-keto acid dehydrogenase complex, mitochondrial (482 aa).

The N-terminal 61 residues, 1 to 61, are a transit peptide targeting the mitochondrion; it reads MAAVRMLRTW…HFLKTTAALR (61 aa). The 76-residue stretch at 64 to 139 folds into the Lipoyl-binding domain; it reads VVQFKLSDIG…YVGKPLVDIE (76 aa). Lysine 105 is subject to N6-lipoyllysine. Lysine 133 is subject to N6-succinyllysine. The critical for association with PPM1K stretch occupies residues 145-160; it reads DSEEDVVETPAVSHDE. The segment at 147–168 is disordered; sequence EEDVVETPAVSHDEHTHQEIKG. The span at 157–168 shows a compositional bias: basic and acidic residues; it reads SHDEHTHQEIKG. The Peripheral subunit-binding (PSBD) domain maps to 172-209; that stretch reads LATPAVRRLAMENNIKLSEVVGSGKDGRILKEDILNYL. Lysine 196 carries the N6-acetyllysine; alternate modification. At lysine 196 the chain carries N6-succinyllysine; alternate. The residue at position 202 (lysine 202) is an N6-acetyllysine. Serine 220 carries the post-translational modification Phosphoserine. N6-acetyllysine is present on residues lysine 243 and lysine 250. The residue at position 261 (lysine 261) is an N6-succinyllysine. Position 289 is an N6-acetyllysine; alternate (lysine 289). The residue at position 289 (lysine 289) is an N6-succinyllysine; alternate. Arginine 291 lines the CoA pocket. 2 positions are modified to N6-acetyllysine: lysine 295 and lysine 304. CoA-binding residues include serine 306, aspartate 349, glutamine 378, serine 399, asparagine 400, serine 403, glycine 424, and isoleucine 426. Lysine 435 carries the post-translational modification N6-acetyllysine. Lysine 440 is subject to N6-acetyllysine; alternate. Lysine 440 is subject to N6-succinyllysine; alternate. Active-site residues include histidine 452 and aspartate 456.

This sequence belongs to the 2-oxoacid dehydrogenase family. Forms a 24-polypeptide structural core with octahedral symmetry that represents the E2 component of the branched-chain alpha-ketoacid dehydrogenase (BCKDH) complex. The BCKDH complex is composed of three major building blocks E1, E2 and E3. It is organized around E2, a 24-meric cubic core composed of DBT, to which are associated 6 to 12 copies of E1, and approximately 6 copies of the dehydrogenase E3, a DLD dimer. Interacts with PPM1K with a 24:1 stoichiometry; the N-terminal region (residues 49-61) of PPM1K and C-terminal linker of the lipoyl domain of DBT/E2 (residues 145-160) are critical for this interaction whereas the lipoyl prosthetic group is dispensable. This interaction requires colocalization in mitochondria. PPM1K competes with BCKDK for binding to DBT; this interaction is modulated by branched-chain alpha-keto acids (BCKAs). At steady state, BCKDH holoenzyme preferentially binds BCKDK and BCKDHA is phosphorylated. In response to high levels of BCKAs, BCKDK is replaced by PPM1K leading to BCKDHA dephosphorylation. (R)-lipoate serves as cofactor.

Its subcellular location is the mitochondrion matrix. It catalyses the reaction N(6)-[(R)-dihydrolipoyl]-L-lysyl-[protein] + 2-methylpropanoyl-CoA = N(6)-[(R)-S(8)-2-methylpropanoyldihydrolipoyl]-L-lysyl-[protein] + CoA. The branched-chain alpha-keto dehydrogenase complex catalyzes the overall conversion of alpha-keto acids to acyl-CoA and CO(2). It contains multiple copies of three enzymatic components: branched-chain alpha-keto acid decarboxylase (E1), lipoamide acyltransferase (E2) and lipoamide dehydrogenase (E3). Within this complex, the catalytic function of this enzyme is to accept, and to transfer to coenzyme A, acyl groups that are generated by the branched-chain alpha-keto acid decarboxylase component. The polypeptide is Lipoamide acyltransferase component of branched-chain alpha-keto acid dehydrogenase complex, mitochondrial (Homo sapiens (Human)).